Consider the following 410-residue polypeptide: Na(+)/H(+) antiporter NhaA 1/4 (410 aa).

A run of 11 helical transmembrane segments spans residues valine 16 to leucine 36, leucine 55 to valine 75, alanine 95 to phenylalanine 115, glycine 125 to valine 145, phenylalanine 156 to cysteine 176, serine 178 to leucine 198, alanine 215 to valine 235, isoleucine 275 to phenylalanine 295, alanine 299 to glycine 319, isoleucine 340 to leucine 360, and alanine 371 to glycine 391.

The protein belongs to the NhaA Na(+)/H(+) (TC 2.A.33) antiporter family.

It localises to the cell membrane. It carries out the reaction Na(+)(in) + 2 H(+)(out) = Na(+)(out) + 2 H(+)(in). Its function is as follows. Na(+)/H(+) antiporter that extrudes sodium in exchange for external protons. The protein is Na(+)/H(+) antiporter NhaA 1/4 of Streptomyces coelicolor (strain ATCC BAA-471 / A3(2) / M145).